Here is a 253-residue protein sequence, read N- to C-terminus: Coenzyme F420:L-glutamate ligase (253 aa).

Residues 9-12 (LPEI), 38-39 (ST), and lysine 43 contribute to the GTP site. Aspartate 113 lines the a divalent metal cation pocket. Asparagine 116 contributes to the GTP binding site. Residues aspartate 148, threonine 149, and glutamate 206 each coordinate a divalent metal cation. Residue 204–211 (AGEGDDGT) coordinates GTP.

This sequence belongs to the CofE family. As to quaternary structure, homodimer. Mg(2+) serves as cofactor. Requires Mn(2+) as cofactor. It depends on K(+) as a cofactor.

The enzyme catalyses oxidized coenzyme F420-0 + GTP + L-glutamate = oxidized coenzyme F420-1 + GDP + phosphate + H(+). The catalysed reaction is oxidized coenzyme F420-1 + GTP + L-glutamate = oxidized coenzyme F420-2 + GDP + phosphate + H(+). It participates in cofactor biosynthesis; coenzyme F420 biosynthesis. In terms of biological role, catalyzes the GTP-dependent successive addition of two or more gamma-linked L-glutamates to the L-lactyl phosphodiester of 7,8-didemethyl-8-hydroxy-5-deazariboflavin (F420-0) to form coenzyme F420-0-glutamyl-glutamate (F420-2) or polyglutamated F420 derivatives. This is Coenzyme F420:L-glutamate ligase from Natronomonas pharaonis (strain ATCC 35678 / DSM 2160 / CIP 103997 / JCM 8858 / NBRC 14720 / NCIMB 2260 / Gabara) (Halobacterium pharaonis).